A 344-amino-acid polypeptide reads, in one-letter code: Eukaryotic translation initiation factor 3 subunit H (344 aa).

Residues methionine 1–leucine 24 are disordered. Over residues threonine 8–threonine 23 the composition is skewed to low complexity. Residues isoleucine 31–leucine 165 form the MPN domain. Residues serine 256 to arginine 305 form a disordered region. The span at lysine 261 to arginine 272 shows a compositional bias: low complexity.

This sequence belongs to the eIF-3 subunit H family. As to quaternary structure, component of the eukaryotic translation initiation factor 3 (eIF-3) complex, which is composed of 13 subunits: eif3a, eif3b, eif3c, eif3d, eif3e, eif3f, eif3g, eif3h, eif3i, eif3j, eif3k, eif3l and eif3m.

It is found in the cytoplasm. In terms of biological role, component of the eukaryotic translation initiation factor 3 (eIF-3) complex, which is involved in protein synthesis of a specialized repertoire of mRNAs and, together with other initiation factors, stimulates binding of mRNA and methionyl-tRNAi to the 40S ribosome. The eIF-3 complex specifically targets and initiates translation of a subset of mRNAs involved in cell proliferation. This Salmo salar (Atlantic salmon) protein is Eukaryotic translation initiation factor 3 subunit H (eif3h).